The chain runs to 278 residues: MDSMPEPASRCLLLLPLLLLLLLLLPAPELGPSQAGAEENDWVRLPSKCEVCKYVAVELKSAFEETGKTKEVIGTGYGILDQKASGVKYTKSDLRLIEVTETICKRLLDYSLHKERTGSNRFAKGMSETFETLHNLVHKGVKVVMDIPYELWNETSAEVADLKKQCDVLVEEFEEVIEDWYRNHQEEDLTEFLCANHVLKGKDTSCLAEQWSGKKGDTAALGGKKSKKKSSRAKAAGGRSSSSKQRKELGGLEGDPSPEEDEGIQKASPLTHSPPDEL.

Residues 1–30 (MDSMPEPASRCLLLLPLLLLLLLLLPAPEL) form the signal peptide. The Saposin B-type domain maps to 47-271 (SKCEVCKYVA…EGIQKASPLT (225 aa)). 3 disulfides stabilise this stretch: Cys-49–Cys-206, Cys-52–Cys-194, and Cys-104–Cys-166. Asn-153 is a glycosylation site (N-linked (GlcNAc...) asparagine). A coiled-coil region spans residues 153-179 (NETSAEVADLKKQCDVLVEEFEEVIED). The disordered stretch occupies residues 215-278 (KGDTAALGGK…PLTHSPPDEL (64 aa)). The span at 233-243 (AKAAGGRSSSS) shows a compositional bias: low complexity.

Belongs to the canopy family. Interacts with HSP90B1; this interaction is disrupted in the presence of ATP. Interacts with TLR1, TLR2, TLR4 and TLR9. Strongest interaction with TLR4.

It is found in the endoplasmic reticulum. In terms of biological role, toll-like receptor (TLR)-specific co-chaperone for HSP90B1. Required for proper TLR folding, except that of TLR3, and hence controls TLR exit from the endoplasmic reticulum. Consequently, required for both innate and adaptive immune responses. In Homo sapiens (Human), this protein is Protein canopy homolog 3 (CNPY3).